A 389-amino-acid chain; its full sequence is Putative 8-amino-7-oxononanoate synthase (389 aa).

Arg-22 is a substrate binding site. 109 to 110 is a pyridoxal 5'-phosphate binding site; sequence GY. His-134 serves as a coordination point for substrate. Pyridoxal 5'-phosphate contacts are provided by residues Ser-182, 207–210, and 238–241; these read DDAH and TLSK. N6-(pyridoxal phosphate)lysine is present on Lys-241. Position 350 (Thr-350) interacts with substrate.

The protein belongs to the class-II pyridoxal-phosphate-dependent aminotransferase family. BioF subfamily. As to quaternary structure, homodimer. Pyridoxal 5'-phosphate serves as cofactor.

The catalysed reaction is 6-carboxyhexanoyl-[ACP] + L-alanine + H(+) = (8S)-8-amino-7-oxononanoate + holo-[ACP] + CO2. Its pathway is cofactor biosynthesis; biotin biosynthesis. Functionally, catalyzes the decarboxylative condensation of pimeloyl-[acyl-carrier protein] and L-alanine to produce 8-amino-7-oxononanoate (AON), [acyl-carrier protein], and carbon dioxide. The polypeptide is Putative 8-amino-7-oxononanoate synthase (bioF) (Parvibaculum lavamentivorans (strain DS-1 / DSM 13023 / NCIMB 13966)).